The primary structure comprises 404 residues: Ethanolamine-phosphate cytidylyltransferase (404 aa).

A disordered region spans residues Tyr-173–Gly-201. Residues Thr-189–Gly-201 are compositionally biased toward polar residues. CTP is bound by residues Ala-239 to Phe-240, His-247 to Phe-250, Lys-277, His-325 to Thr-328, and Ser-354 to Leu-358. Ser-356 is modified (phosphoserine). Thr-359 and Thr-360 each carry phosphothreonine.

It belongs to the cytidylyltransferase family.

The enzyme catalyses phosphoethanolamine + CTP + H(+) = CDP-ethanolamine + diphosphate. Its pathway is phospholipid metabolism; phosphatidylethanolamine biosynthesis; phosphatidylethanolamine from ethanolamine: step 2/3. Its function is as follows. Ethanolamine-phosphate cytidylyltransferase that catalyzes the second step in the synthesis of phosphatidylethanolamine (PE) from ethanolamine via the CDP-ethanolamine pathway. Phosphatidylethanolamine is a dominant inner-leaflet phospholipid in cell membranes, where it plays a role in membrane function by structurally stabilizing membrane-anchored proteins, and participates in important cellular processes such as cell division, cell fusion, blood coagulation, and apoptosis. This is Ethanolamine-phosphate cytidylyltransferase (Pcyt2) from Mus musculus (Mouse).